Here is a 266-residue protein sequence, read N- to C-terminus: NAD kinase 1 (266 aa).

Asp45 serves as the catalytic Proton acceptor. Residues 45–46, 122–123, and Arg148 each bind NAD(+); these read DG and NE. Position 150 (Asp150) interacts with ATP. NAD(+) contacts are provided by residues Ser158 and 161–166; that span reads TAYNKA.

This sequence belongs to the NAD kinase family. As to quaternary structure, homodimer. Requires Ca(2+) as cofactor. It depends on Mn(2+) as a cofactor.

The protein localises to the cytoplasm. The catalysed reaction is NAD(+) + ATP = ADP + NADP(+) + H(+). Its activity is regulated as follows. Allosterically inhibited by NADP and activated by quinolinic acid. Strongly inhibited by HgCl(2). Its function is as follows. Involved in the regulation of the intracellular balance of NAD and NADP, and is a key enzyme in the biosynthesis of NADP. Catalyzes specifically the phosphorylation on 2'-hydroxyl of the adenosine moiety of NAD to yield NADP. It can use ATP and other nucleoside triphosphates (GTP, UTP) as well as inorganic polyphosphate (poly(P)) as a source of phosphorus. The sequence is that of NAD kinase 1 (ppnKA) from Bacillus subtilis (strain 168).